The chain runs to 498 residues: ATP synthase subunit beta, chloroplastic (498 aa).

Position 172 to 179 (172 to 179) interacts with ATP; the sequence is GGAGVGKT.

This sequence belongs to the ATPase alpha/beta chains family. F-type ATPases have 2 components, CF(1) - the catalytic core - and CF(0) - the membrane proton channel. CF(1) has five subunits: alpha(3), beta(3), gamma(1), delta(1), epsilon(1). CF(0) has four main subunits: a(1), b(1), b'(1) and c(9-12).

The protein resides in the plastid. It is found in the chloroplast thylakoid membrane. It catalyses the reaction ATP + H2O + 4 H(+)(in) = ADP + phosphate + 5 H(+)(out). Functionally, produces ATP from ADP in the presence of a proton gradient across the membrane. The catalytic sites are hosted primarily by the beta subunits. The protein is ATP synthase subunit beta, chloroplastic of Saruma henryi (Upright wild ginger).